A 282-amino-acid chain; its full sequence is Bifunctional protein FolD (282 aa).

NADP(+) is bound by residues 166–168 and Ile232; that span reads GAS.

This sequence belongs to the tetrahydrofolate dehydrogenase/cyclohydrolase family. In terms of assembly, homodimer.

The enzyme catalyses (6R)-5,10-methylene-5,6,7,8-tetrahydrofolate + NADP(+) = (6R)-5,10-methenyltetrahydrofolate + NADPH. It carries out the reaction (6R)-5,10-methenyltetrahydrofolate + H2O = (6R)-10-formyltetrahydrofolate + H(+). Its pathway is one-carbon metabolism; tetrahydrofolate interconversion. In terms of biological role, catalyzes the oxidation of 5,10-methylenetetrahydrofolate to 5,10-methenyltetrahydrofolate and then the hydrolysis of 5,10-methenyltetrahydrofolate to 10-formyltetrahydrofolate. This is Bifunctional protein FolD from Histophilus somni (strain 129Pt) (Haemophilus somnus).